A 419-amino-acid chain; its full sequence is Protein-lysine N-methyltransferase EFM2 (419 aa).

Residues W222, 261-263, D290, W318, and A340 contribute to the S-adenosyl-L-methionine site; that span reads GAG.

This sequence belongs to the class I-like SAM-binding methyltransferase superfamily. METTL21 family.

The protein localises to the cytoplasm. In terms of biological role, S-adenosyl-L-methionine-dependent protein-lysine N-methyltransferase that mono- and dimethylates elongation factor 2 (EFT1/EFT2) at 'Lys-613' and methylates elongation factor 3A (YEF3). The chain is Protein-lysine N-methyltransferase EFM2 from Saccharomyces cerevisiae (strain ATCC 204508 / S288c) (Baker's yeast).